Here is a 479-residue protein sequence, read N- to C-terminus: Neuronal acetylcholine receptor subunit alpha-9 (479 aa).

A signal peptide spans 1 to 22; the sequence is MNWSHSCISFCWIYFAASRLRA. At 23–238 the chain is on the extracellular side; the sequence is AETADGKYAQ…FTLLLKRRSS (216 aa). Asn-57 carries an N-linked (GlcNAc...) asparagine glycan. A disulfide bond links Cys-155 and Cys-169. The N-linked (GlcNAc...) asparagine glycan is linked to Asn-170. The Na(+) site is built by Ser-191 and Asp-193. Residues Cys-219 and Cys-220 are joined by a disulfide bond. The next 3 membrane-spanning stretches (helical) occupy residues 239 to 259, 269 to 289, and 303 to 323; these read FYIV…PLSF, VSLG…VAEI, and YIAT…VMNI. Over 324 to 457 the chain is Cytoplasmic; that stretch reads HFCGAEARPV…WKKVAKVIDR (134 aa). The helical transmembrane segment at 458-478 threads the bilayer; the sequence is FFMWIFFIMVFVMTILIIARA.

Belongs to the ligand-gated ion channel (TC 1.A.9) family. Acetylcholine receptor (TC 1.A.9.1) subfamily. Alpha-9/CHRNA9 sub-subfamily. In terms of assembly, forms homo- or heteropentameric channels in conjunction with CHRNA10. The native outer hair cell receptor is composed of CHRNA9:CHRNA10 heterooligomers. Found in the stoichiometric form (CHRNA9)2:(CHRNA10)3. In terms of processing, N-glycosylated. Expressed in cochlea, keratinocytes, pituitary gland, B-cells and T-cells.

It is found in the synaptic cell membrane. It localises to the cell membrane. The enzyme catalyses Ca(2+)(in) = Ca(2+)(out). It catalyses the reaction K(+)(in) = K(+)(out). The catalysed reaction is Na(+)(in) = Na(+)(out). It carries out the reaction Mg(2+)(in) = Mg(2+)(out). Activated by a myriad of ligands such as acetylcholine. AChR activity is inhibited by the antagonist alpha-conotoxins RgIA and GeXXA, small disulfide-constrained peptides from cone snails. Functionally, component of neuronal acetylcholine receptors (nAChRs) that function as pentameric, ligand-gated cation channels with high calcium permeability among other activities. nAChRs are excitatory neurotrasnmitter receptors formed by a collection of nAChR subunits known to mediate synaptic transmission in the nervous system and the neuromuscular junction. Each nAchR subunit confers differential attributes to channel properties, including activation, deactivation and desensitization kinetics, pH sensitivity, cation permeability, and binding to allosteric modulators. Forms either homopentamers or heteropentamers with CHRNA10. Expressed in the inner ear, in sympathetic neurons and in other non-neuronal cells, such as skin keratinocytes and lymphocytes. nAChR formed by CHRNA9:CHRNA10 mediate central nervous system control of auditory and vestibular sensory processing. The channel is permeable to a range of divalent cations including calcium, the influx of which may activate a potassium current which hyperpolarizes the cell membrane. In the ear, mediates synaptic transmission between efferent olivocochlear fibers and hair cells of the cochlea, this may lead to a reduction in basilar membrane motion, altering the activity of auditory nerve fibers and reducing the range of dynamic hearing. This may protect against acoustic trauma. May also regulate keratinocyte adhesion. The polypeptide is Neuronal acetylcholine receptor subunit alpha-9 (Homo sapiens (Human)).